We begin with the raw amino-acid sequence, 1170 residues long: Structural maintenance of chromosomes protein 2 (1170 aa).

Residue 32–39 (GLNGSGKS) participates in ATP binding. Positions 172-469 (KMFEDRREKA…DKLRARLVEY (298 aa)) form a coiled coil. Positions 523–641 (VHGVVGQLFQ…CEDPETAKKI (119 aa)) constitute an SMC hinge domain. Residues 678-1027 (VDIQKYNQIQ…ISKLNEYKRE (350 aa)) are a coiled coil.

It belongs to the SMC family. SMC2 subfamily. Forms a heterodimer with SMC4. Component of the condensin complex, which contains the SMC2 and SMC4 heterodimer, and three non SMC subunits that probably regulate the complex: BRN1, YCS4 and YCG1/YCS5.

It localises to the nucleus. Its subcellular location is the cytoplasm. It is found in the chromosome. Central component of the condensin complex, a complex required for conversion of interphase chromatin into mitotic-like condense chromosomes. The condensin complex probably introduces positive supercoils into relaxed DNA in the presence of type I topoisomerases and converts nicked DNA into positive knotted forms in the presence of type II topoisomerases. This Saccharomyces cerevisiae (strain ATCC 204508 / S288c) (Baker's yeast) protein is Structural maintenance of chromosomes protein 2 (SMC2).